Reading from the N-terminus, the 598-residue chain is Aspartate--tRNA(Asp/Asn) ligase (598 aa).

Glutamate 177 provides a ligand contact to L-aspartate. Positions 201 to 204 are aspartate; that stretch reads QLFK. Residue arginine 223 coordinates L-aspartate. ATP-binding positions include 223–225 and glutamine 232; that span reads RDE. L-aspartate is bound at residue histidine 456. Glutamate 493 is a binding site for ATP. L-aspartate is bound at residue arginine 500. Position 545 to 548 (545 to 548) interacts with ATP; the sequence is GVDR.

Belongs to the class-II aminoacyl-tRNA synthetase family. Type 1 subfamily. In terms of assembly, homodimer.

The protein resides in the cytoplasm. It carries out the reaction tRNA(Asx) + L-aspartate + ATP = L-aspartyl-tRNA(Asx) + AMP + diphosphate. Functionally, aspartyl-tRNA synthetase with relaxed tRNA specificity since it is able to aspartylate not only its cognate tRNA(Asp) but also tRNA(Asn). Reaction proceeds in two steps: L-aspartate is first activated by ATP to form Asp-AMP and then transferred to the acceptor end of tRNA(Asp/Asn). The chain is Aspartate--tRNA(Asp/Asn) ligase from Prochlorococcus marinus subsp. pastoris (strain CCMP1986 / NIES-2087 / MED4).